Consider the following 493-residue polypeptide: Galactose-1-phosphate uridylyltransferase 2 (493 aa).

It belongs to the galactose-1-phosphate uridylyltransferase type 2 family.

The protein localises to the cytoplasm. It carries out the reaction alpha-D-galactose 1-phosphate + UDP-alpha-D-glucose = alpha-D-glucose 1-phosphate + UDP-alpha-D-galactose. The protein operates within carbohydrate metabolism; galactose metabolism. This is Galactose-1-phosphate uridylyltransferase 2 (galT2) from Streptococcus pneumoniae (strain ATCC BAA-255 / R6).